We begin with the raw amino-acid sequence, 177 residues long: uncharacterized protein (177 aa).

Residues 10–177 (LILRQITDQD…NVYSIVKPRE (168 aa)) enclose the N-acetyltransferase domain.

The protein belongs to the acetyltransferase family.

This is an uncharacterized protein from Bacillus subtilis (strain 168).